A 533-amino-acid chain; its full sequence is DNA-directed RNA polymerase III subunit RPC3 (533 aa).

Positions 161-183 (PLVPDTDSSDPGPPPPAPNLVIN) are disordered. Position 194 is a phosphoserine (Ser-194). Positions 197-228 (GKGKRRRSSDEDAAGEPKAKKPRCTDNEEPTP) are disordered. Residues 211-222 (GEPKAKKPRCTD) show a composition bias toward basic and acidic residues.

Belongs to the eukaryotic RPC3/POLR3C RNA polymerase subunit family. Component of the RNA polymerase III complex consisting of 17 subunits: a ten-subunit horseshoe-shaped catalytic core composed of POLR3A/RPC1, POLR3B/RPC2, POLR1C/RPAC1, POLR1D/RPAC2, POLR3K/RPC10, POLR2E/RPABC1, POLR2F/RPABC2, POLR2H/RPABC3, POLR2K/RPABC4 and POLR2L/RPABC5; a mobile stalk composed of two subunits POLR3H/RPC8 and CRCP/RPC9, protruding from the core and functioning primarily in transcription initiation; and additional subunits homologous to general transcription factors of the RNA polymerase II machinery, POLR3C/RPC3-POLR3F/RPC6-POLR3G/RPC7 heterotrimer required for transcription initiation and POLR3D/RPC4-POLR3E/RPC5 heterodimer involved in both transcription initiation and termination. Directly interacts with POLR3G/RPC7 and POLR3GL. Directly interacts with POLR3F/RPC6. Interacts with GTF3C4. As part of the RNA polymerase III complex, interacts with PKP2.

The protein localises to the nucleus. In terms of biological role, DNA-dependent RNA polymerase catalyzes the transcription of DNA into RNA using the four ribonucleoside triphosphates as substrates. Specific peripheric component of RNA polymerase III (Pol III) which synthesizes small non-coding RNAs including 5S rRNA, snRNAs, tRNAs and miRNAs from at least 500 distinct genomic loci. Part of POLR3C/RPC3-POLR3F/RPC6-POLR3G/RPC7 heterotrimer, coordinates the dynamics of Pol III stalk and clamp modules during the transition from apo to elongation state. Pol III plays a key role in sensing and limiting infection by intracellular bacteria and DNA viruses. Acts as a nuclear and cytosolic DNA sensor involved in innate immune response. Can sense non-self dsDNA that serves as template for transcription into dsRNA. The non-self RNA polymerase III transcripts, such as Epstein-Barr virus-encoded RNAs (EBERs) induce type I interferon and NF-kappa-B through the RIG-I pathway. Preferentially binds single-stranded DNA (ssDNA) in a sequence-independent manner. This chain is DNA-directed RNA polymerase III subunit RPC3, found in Rattus norvegicus (Rat).